Consider the following 418-residue polypeptide: Secreted aspartic protease 6 (418 aa).

The N-terminal stretch at 1–18 (MFLKNILSVLRFALLIDA) is a signal peptide. A propeptide spans 19–76 (APVKRSPGFVTLDFNVKRSLVVPDDPTAESKRSPLFLDLDPTQIPVDDTGRNVGVDKR) (activation peptide). Positions 90-404 (YSADITVGSN…DLDDKKISMA (315 aa)) constitute a Peptidase A1 domain. Aspartate 108 is a catalytic residue. 108-110 (DTG) lines the pepstatin A pocket. An intrachain disulfide couples cysteine 123 to cysteine 135. Residue asparagine 138 is glycosylated (N-linked (GlcNAc...) asparagine). A Zn(2+)-binding site is contributed by aspartate 268. Aspartate 294 is an active-site residue. 294 to 298 (DSGTT) is a binding site for pepstatin A. A disulfide bridge connects residues cysteine 332 and cysteine 370.

This sequence belongs to the peptidase A1 family.

It localises to the secreted. It carries out the reaction Preferential cleavage at the carboxyl of hydrophobic amino acids, but fails to cleave 15-Leu-|-Tyr-16, 16-Tyr-|-Leu-17 and 24-Phe-|-Phe-25 of insulin B chain. Activates trypsinogen, and degrades keratin.. Its activity is regulated as follows. Inhibited by pepstatin A analogs. In terms of biological role, secreted aspartic peptidases (SAPs) are a group of ten acidic hydrolases considered as key virulence factors. These enzymes supply the fungus with nutrient amino acids as well as are able to degrade the selected host's proteins involved in the immune defense. Moreover, acts toward human hemoglobin though limited proteolysis to generate a variety of antimicrobial hemocidins, enabling to compete with the other microorganisms of the same physiological niche using the microbicidal peptides generated from the host protein. The protein is Secreted aspartic protease 6 of Candida albicans (Yeast).